The primary structure comprises 312 residues: Malate dehydrogenase (312 aa).

NAD(+)-binding positions include 12-17 (GAGFTG) and Asp36. Residues Arg87 and Arg93 each coordinate substrate. NAD(+)-binding positions include Asn100 and 123–125 (LTN). Asn125 contacts substrate. The residue at position 149 (Ser149) is a Phosphoserine. Arg156 lines the substrate pocket. Catalysis depends on His180, which acts as the Proton acceptor.

The protein belongs to the LDH/MDH superfamily. MDH type 3 family.

The catalysed reaction is (S)-malate + NAD(+) = oxaloacetate + NADH + H(+). Catalyzes the reversible oxidation of malate to oxaloacetate. The polypeptide is Malate dehydrogenase (Bacillus cytotoxicus (strain DSM 22905 / CIP 110041 / 391-98 / NVH 391-98)).